The primary structure comprises 865 residues: Aconitate hydratase B (865 aa).

Residues R191, 244 to 246 (SSR), 414 to 416 (QDT), and S498 contribute to the substrate site. 3 residues coordinate [4Fe-4S] cluster: C710, C769, and C772. R791 and R796 together coordinate substrate.

Belongs to the aconitase/IPM isomerase family. As to quaternary structure, monomer. AcnB can also form a homodimer. The monomer-homodimer transition is dependent on iron availability and the carboxymethylation of C-273 inhibits the dimer formation. Requires [4Fe-4S] cluster as cofactor.

It carries out the reaction citrate = D-threo-isocitrate. The catalysed reaction is (2S,3R)-3-hydroxybutane-1,2,3-tricarboxylate = 2-methyl-cis-aconitate + H2O. Its pathway is organic acid metabolism; propanoate degradation. The protein operates within carbohydrate metabolism; tricarboxylic acid cycle; isocitrate from oxaloacetate: step 2/2. Involved in the catabolism of short chain fatty acids (SCFA) via the tricarboxylic acid (TCA)(acetyl degradation route) and the 2-methylcitrate cycle I (propionate degradation route). Catalyzes the reversible isomerization of citrate to isocitrate via cis-aconitate. Also catalyzes the hydration of 2-methyl-cis-aconitate to yield (2R,3S)-2-methylisocitrate. The apo form of AcnB functions as a RNA-binding regulatory protein. During oxidative stress inactive AcnB apo-enzyme without iron sulfur clusters binds the acnB mRNA 3' UTRs (untranslated regions), stabilizes acnB mRNA and increases AcnB synthesis, thus mediating a post-transcriptional positive autoregulatory switch. AcnB also decreases the stability of the sodA transcript. This chain is Aconitate hydratase B, found in Escherichia coli (strain K12).